A 183-amino-acid chain; its full sequence is uncharacterized protein (183 aa).

This is an uncharacterized protein from Saccharomyces cerevisiae (strain ATCC 204508 / S288c) (Baker's yeast).